A 251-amino-acid polypeptide reads, in one-letter code: ATP synthase subunit a (251 aa).

Transmembrane regions (helical) follow at residues 28–48, 63–80, 86–106, 115–135, 154–176, 195–215, and 219–239; these read FTQSNEIMVLGTAIVLGIIAL, LVEISYNFIMGLCIEQIG, FFPFIFTLFFFVLMGNLLGLF, HVAVTGGLAVLVIVLVTAVAL, ALAPIIVPIEIISYLSRPVSLSI, FMFLLIGALGTFGYFAALLPM, and VTLVGFELLVAFLQAYVFAIL.

Belongs to the ATPase A chain family. In terms of assembly, F-type ATPases have 2 components, CF(1) - the catalytic core - and CF(0) - the membrane proton channel. CF(1) has five subunits: alpha(3), beta(3), gamma(1), delta(1), epsilon(1). CF(0) has three main subunits: a(1), b(2) and c(9-12). The alpha and beta chains form an alternating ring which encloses part of the gamma chain. CF(1) is attached to CF(0) by a central stalk formed by the gamma and epsilon chains, while a peripheral stalk is formed by the delta and b chains.

It localises to the cell inner membrane. Its function is as follows. Key component of the proton channel; it plays a direct role in the translocation of protons across the membrane. This Granulibacter bethesdensis (strain ATCC BAA-1260 / CGDNIH1) protein is ATP synthase subunit a.